A 56-amino-acid chain; its full sequence is Small ribosomal subunit protein uS14 (56 aa).

C21, C24, C39, and C42 together coordinate Zn(2+).

It belongs to the universal ribosomal protein uS14 family. Requires Zn(2+) as cofactor.

The polypeptide is Small ribosomal subunit protein uS14 (rps29A) (Guillardia theta (Cryptophyte)).